The following is a 225-amino-acid chain: Late gene expression regulator BDLF4 (225 aa).

Residues 1–20 are disordered; the sequence is MSDQGRLSLPRGEGGTDEPN.

This sequence belongs to the herpesviridae UL92 family.

In terms of biological role, part of the viral pre-initiation complex (vPIC) that is responsible for the expression of vPIC-dependent late genes. vPIC is composed of at least BcRF1 that binds the viral TATT box, BDLF3.5, BDLF4, BFRF2, BGLF3, BGLF4 and BVLF1. This is Late gene expression regulator BDLF4 from Homo sapiens (Human).